A 282-amino-acid chain; its full sequence is Phosphate import ATP-binding protein PstB (282 aa).

In terms of domain architecture, ABC transporter spans 36-277 (IEVKNLNFFY…PARKETEDYI (242 aa)). 68–75 (GPSGCGKS) serves as a coordination point for ATP.

The protein belongs to the ABC transporter superfamily. Phosphate importer (TC 3.A.1.7) family. In terms of assembly, the complex is composed of two ATP-binding proteins (PstB), two transmembrane proteins (PstC and PstA) and a solute-binding protein (PstS).

The protein resides in the cell inner membrane. It carries out the reaction phosphate(out) + ATP + H2O = ADP + 2 phosphate(in) + H(+). In terms of biological role, part of the ABC transporter complex PstSACB involved in phosphate import. Responsible for energy coupling to the transport system. The chain is Phosphate import ATP-binding protein PstB from Burkholderia pseudomallei (strain 1710b).